Here is a 356-residue protein sequence, read N- to C-terminus: Histidinol-phosphate aminotransferase (356 aa).

Position 214 is an N6-(pyridoxal phosphate)lysine (lysine 214).

Belongs to the class-II pyridoxal-phosphate-dependent aminotransferase family. Histidinol-phosphate aminotransferase subfamily. Homodimer. Requires pyridoxal 5'-phosphate as cofactor.

It carries out the reaction L-histidinol phosphate + 2-oxoglutarate = 3-(imidazol-4-yl)-2-oxopropyl phosphate + L-glutamate. It functions in the pathway amino-acid biosynthesis; L-histidine biosynthesis; L-histidine from 5-phospho-alpha-D-ribose 1-diphosphate: step 7/9. In Shigella sonnei (strain Ss046), this protein is Histidinol-phosphate aminotransferase.